A 444-amino-acid polypeptide reads, in one-letter code: Inward rectifier potassium channel 4 (444 aa).

Over M1–W55 the chain is Cytoplasmic. Residues R56–I80 traverse the membrane as a helical segment. The Extracellular segment spans residues A81–G119. Residues F120 to Q131 constitute an intramembrane region (helical; Pore-forming). An intramembrane region (pore-forming) is located at residues T132–F138. The short motif at T133–F138 is the Selectivity filter element. The Extracellular segment spans residues R139–L147. Residues A148–T169 form a helical membrane-spanning segment. The Cytoplasmic portion of the chain corresponds to I170–I444. The PDZ-binding motif lies at S442–I444.

Belongs to the inward rectifier-type potassium channel (TC 1.A.2.1) family. KCNJ4 subfamily. In terms of assembly, homomultimeric and heteromultimeric association with KCNJ2 and KCNJ12. Interacts with DLG2 and DLG4. Associates, via its PDZ-recognition domain, with a complex containing LIN7A, LIN7B, LIN7C, DLG1, CASK and APBA1. Interacts with TAX1BP3. TAX1BP3 competes with LIN7 family members for KCNJ4 binding.

The protein resides in the cell membrane. Its subcellular location is the postsynaptic cell membrane. It is found in the cytoplasmic vesicle membrane. It carries out the reaction K(+)(in) = K(+)(out). Inward rectifier potassium channels are characterized by a greater tendency to allow potassium to flow into the cell rather than out of it. Their voltage dependence is regulated by the concentration of extracellular potassium; as external potassium is raised, the voltage range of the channel opening shifts to more positive voltages. The inward rectification is mainly due to the blockage of outward current by internal magnesium. Can be blocked by extracellular barium and cesium. The polypeptide is Inward rectifier potassium channel 4 (KCNJ4) (Mesocricetus auratus (Golden hamster)).